The primary structure comprises 242 residues: DNA repair protein RecO (242 aa).

This sequence belongs to the RecO family.

Functionally, involved in DNA repair and RecF pathway recombination. This is DNA repair protein RecO from Dechloromonas aromatica (strain RCB).